A 156-amino-acid chain; its full sequence is Small ribosomal subunit protein uS7 (156 aa).

This sequence belongs to the universal ribosomal protein uS7 family. As to quaternary structure, part of the 30S ribosomal subunit. Contacts proteins S9 and S11.

Functionally, one of the primary rRNA binding proteins, it binds directly to 16S rRNA where it nucleates assembly of the head domain of the 30S subunit. Is located at the subunit interface close to the decoding center, probably blocks exit of the E-site tRNA. This chain is Small ribosomal subunit protein uS7, found in Desulfitobacterium hafniense (strain Y51).